The following is a 284-amino-acid chain: MTFHQPVSETAQPDEASGHPLFADAPSSVEFNKLRKRLLRQVRQAFEDFTMVKPGDRWLVALSGGKDSYGLLAVLLDLKWRGLLPVELLACNLDQGQPNFPKHILPDYLTRLGVPHRIEYQDTYSVVTEKIPENRTYCSLCSRLRRGHLYRIAREEGCSSLVLGHHREDILETFFMNFFHGGRLAAMPPKLLNDEGDVLVLRPLAYCAETDLVKFAEGMKFPIIPCDLCGSQDGLQRNAMKAMLEDIERRMPGRKDTMIRALANVRPSHLLDRQLFDFAGLGIL.

Residues 1 to 11 (MTFHQPVSETA) show a composition bias toward polar residues. The tract at residues 1–20 (MTFHQPVSETAQPDEASGHP) is disordered. A PP-loop motif motif is present at residues 63–68 (SGGKDS). Cys-138, Cys-141, and Cys-229 together coordinate [4Fe-4S] cluster.

Belongs to the TtcA family. In terms of assembly, homodimer. Requires Mg(2+) as cofactor. It depends on [4Fe-4S] cluster as a cofactor.

It localises to the cytoplasm. It carries out the reaction cytidine(32) in tRNA + S-sulfanyl-L-cysteinyl-[cysteine desulfurase] + AH2 + ATP = 2-thiocytidine(32) in tRNA + L-cysteinyl-[cysteine desulfurase] + A + AMP + diphosphate + H(+). It participates in tRNA modification. Catalyzes the ATP-dependent 2-thiolation of cytidine in position 32 of tRNA, to form 2-thiocytidine (s(2)C32). The sulfur atoms are provided by the cysteine/cysteine desulfurase (IscS) system. The protein is tRNA-cytidine(32) 2-sulfurtransferase of Chelativorans sp. (strain BNC1).